The following is a 943-amino-acid chain: UvrABC system protein A (943 aa).

32 to 39 (GLSGSGKS) contributes to the ATP binding site. The C4-type zinc-finger motif lies at 251-278 (CPVCGFTVPELEPRLFSFNAPFGSCPTC). ABC transporter domains lie at 308–589 (WNPI…KKSI) and 609–937 (GSGR…QYLK). 641-648 (GVSGSGKS) lines the ATP pocket. The C4-type zinc-finger motif lies at 740 to 766 (CEACSGDGIIKIEMHFLPDVYVPCEVC).

The protein belongs to the ABC transporter superfamily. UvrA family. As to quaternary structure, forms a heterotetramer with UvrB during the search for lesions.

The protein resides in the cytoplasm. The UvrABC repair system catalyzes the recognition and processing of DNA lesions. UvrA is an ATPase and a DNA-binding protein. A damage recognition complex composed of 2 UvrA and 2 UvrB subunits scans DNA for abnormalities. When the presence of a lesion has been verified by UvrB, the UvrA molecules dissociate. In Streptococcus mutans serotype c (strain ATCC 700610 / UA159), this protein is UvrABC system protein A.